A 101-amino-acid chain; its full sequence is Small ribosomal subunit protein bS18c (101 aa).

Belongs to the bacterial ribosomal protein bS18 family. In terms of assembly, part of the 30S ribosomal subunit.

The protein resides in the plastid. The protein localises to the chloroplast. The polypeptide is Small ribosomal subunit protein bS18c (Lactuca sativa (Garden lettuce)).